The sequence spans 339 residues: Phenylalanine--tRNA ligase alpha subunit (339 aa).

Glutamate 247 is a Mg(2+) binding site.

It belongs to the class-II aminoacyl-tRNA synthetase family. Phe-tRNA synthetase alpha subunit type 1 subfamily. In terms of assembly, tetramer of two alpha and two beta subunits. Mg(2+) is required as a cofactor.

It is found in the cytoplasm. It catalyses the reaction tRNA(Phe) + L-phenylalanine + ATP = L-phenylalanyl-tRNA(Phe) + AMP + diphosphate + H(+). This Deinococcus deserti (strain DSM 17065 / CIP 109153 / LMG 22923 / VCD115) protein is Phenylalanine--tRNA ligase alpha subunit.